Here is a 423-residue protein sequence, read N- to C-terminus: Histidine--tRNA ligase (423 aa).

This sequence belongs to the class-II aminoacyl-tRNA synthetase family. Homodimer.

Its subcellular location is the cytoplasm. The catalysed reaction is tRNA(His) + L-histidine + ATP = L-histidyl-tRNA(His) + AMP + diphosphate + H(+). The chain is Histidine--tRNA ligase from Haemophilus influenzae (strain 86-028NP).